We begin with the raw amino-acid sequence, 275 residues long: GVSVSHASKKITRATTIFSNTEYENFTEAETIRGNVTQRSQSSDDFTRIVGGENAKPGQFPWQVLLNGKVEAFCGGSIINEKWVVTAAHCIKPDDNITVVAGEYNIQETENTEQKRNVIRIIPYHKYNATINKYNHDIALLELDKPLTLNSYVTPICIANREYTNIFLNFGSGYVSGWGRVFNRGRQASILQYLRVPFVDRATCLRSTKFTIYNNMFCAGFDVGGKDSCEGDSGGPHVTEVEGTSFLTGIISWGEECAIKGKYGVYTRVSWYVNW.

The residue at position 23 (Tyr-23) is a Sulfotyrosine. A glycan (N-linked (GlcNAc...) asparagine) is linked at Asn-25. Thr-27 carries the phosphothreonine modification. The N-linked (GlcNAc...) asparagine glycan is linked to Asn-35. Thr-47 carries O-linked (GalNAc...) threonine glycosylation. Positions 49–275 constitute a Peptidase S1 domain; it reads IVGGENAKPG…YTRVSWYVNW (227 aa). Cysteines 74 and 90 form a disulfide. The active-site Charge relay system is the His-89. Asn-96 is a glycosylation site (N-linked (GlcNAc...) asparagine). 5 residues coordinate Ca(2+): Glu-103, Asn-105, Glu-108, Glu-110, and Glu-113. N-linked (GlcNAc...) asparagine glycosylation is present at Asn-128. The active-site Charge relay system is Asp-137. Intrachain disulfides connect Cys-204–Cys-218 and Cys-229–Cys-257. The active-site Charge relay system is Ser-233.

Belongs to the peptidase S1 family. As to quaternary structure, heterodimer of a light chain and a heavy chain; disulfide-linked. Interacts (inactive and activated) with F11 (activated) in calcium-dependent manner. Interacts with SERPINC1. Activated by factor XIa, which excises the activation peptide. The propeptide can also be removed by snake venom protease. Activated by coagulation factor VIIa-tissue factor (F7-F3) complex in calcium-dependent manner.

The protein resides in the secreted. The catalysed reaction is Selective cleavage of Arg-|-Ile bond in factor X to form factor Xa.. Its function is as follows. Factor IX is a vitamin K-dependent plasma protein that participates in the intrinsic pathway of blood coagulation by converting factor X to its active form in the presence of Ca(2+) ions, phospholipids, and factor VIIIa. This chain is Coagulation factor IX (F9), found in Oryctolagus cuniculus (Rabbit).